Consider the following 423-residue polypeptide: D-threonate kinase (423 aa).

Substrate-binding positions include Asp-9, Arg-51, and 81 to 84; that span reads KIDS. ATP-binding positions include Ser-245, 355-358, and Gly-401; that span reads GGDI.

Belongs to the four-carbon acid sugar kinase family.

The enzyme catalyses D-threonate + ATP = 4-O-phospho-D-threonate + ADP + H(+). In terms of biological role, catalyzes the ATP-dependent phosphorylation of D-threonate to D-threonate 4-phosphate. Can also phosphorylate 4-hydroxy-L-threonine, with lower efficiency. This side reaction may serve to deal with the toxicity of 4-hydroxy-L-threonine by converting it into 4-hydroxy-L-threonine 4-phosphate, a useful product that can be used by PdxA2. This Salmonella typhimurium (strain LT2 / SGSC1412 / ATCC 700720) protein is D-threonate kinase.